Consider the following 142-residue polypeptide: MFQGASALTLDAKGRMSVPARYREALQGQAEGRVTVTKHPDGCLLLFPRPEWEVFRAKIAALPMDAHWWRRIFLGNAMDVDLDSAGRILVSPELRMAAGLEKEVMLLGMGSHFELWDSQTYIAKEQAAMAQGMPDALKNFTF.

SpoVT-AbrB domains lie at 5–51 (ASAL…PRPE) and 77–120 (AMDV…DSQT).

The protein belongs to the MraZ family. As to quaternary structure, forms oligomers.

The protein resides in the cytoplasm. Its subcellular location is the nucleoid. This is Transcriptional regulator MraZ from Burkholderia multivorans (strain ATCC 17616 / 249).